Reading from the N-terminus, the 78-residue chain is Sec-independent protein translocase protein TatA (78 aa).

Residues 1 to 21 (MGSLSIWHWIVVLAVVLLLFG) form a helical membrane-spanning segment. Residues 43 to 78 (LAEDDEPAKTPAAPPEAPRPLPHQTSSAAEAEKKPV) form a disordered region. Residues 54 to 63 (AAPPEAPRPL) show a composition bias toward pro residues.

Belongs to the TatA/E family. As to quaternary structure, the Tat system comprises two distinct complexes: a TatABC complex, containing multiple copies of TatA, TatB and TatC subunits, and a separate TatA complex, containing only TatA subunits. Substrates initially bind to the TatABC complex, which probably triggers association of the separate TatA complex to form the active translocon.

It is found in the cell inner membrane. Part of the twin-arginine translocation (Tat) system that transports large folded proteins containing a characteristic twin-arginine motif in their signal peptide across membranes. TatA could form the protein-conducting channel of the Tat system. The chain is Sec-independent protein translocase protein TatA from Xanthobacter autotrophicus (strain ATCC BAA-1158 / Py2).